We begin with the raw amino-acid sequence, 234 residues long: UPF0173 metal-dependent hydrolase RL2074 (234 aa).

Belongs to the UPF0173 family.

The protein is UPF0173 metal-dependent hydrolase RL2074 of Rhizobium johnstonii (strain DSM 114642 / LMG 32736 / 3841) (Rhizobium leguminosarum bv. viciae).